We begin with the raw amino-acid sequence, 396 residues long: Elongation factor Tu (396 aa).

The tr-type G domain occupies 10–205; sequence KPHVNIGTIG…AVDSYIPTPE (196 aa). Positions 19-26 are G1; the sequence is GHVDHGKT. 19–26 contributes to the GTP binding site; that stretch reads GHVDHGKT. T26 serves as a coordination point for Mg(2+). The tract at residues 60 to 64 is G2; sequence GITIN. Residues 81–84 are G3; sequence DCPG. Residues 81–85 and 136–139 each bind GTP; these read DCPGH and NKCD. The tract at residues 136–139 is G4; that stretch reads NKCD. Positions 174–176 are G5; the sequence is SAK.

It belongs to the TRAFAC class translation factor GTPase superfamily. Classic translation factor GTPase family. EF-Tu/EF-1A subfamily. Monomer.

The protein resides in the cytoplasm. The enzyme catalyses GTP + H2O = GDP + phosphate + H(+). GTP hydrolase that promotes the GTP-dependent binding of aminoacyl-tRNA to the A-site of ribosomes during protein biosynthesis. The chain is Elongation factor Tu from Brevibacillus brevis (strain 47 / JCM 6285 / NBRC 100599).